The following is a 146-amino-acid chain: Hemoglobin subunit beta-2 (146 aa).

V1 carries the N-acetylvaline modification. Positions 2–146 (HLHGDEKAAV…VASALAHKYH (145 aa)) constitute a Globin domain. K17 is subject to N6-succinyllysine. S44 is subject to Phosphoserine. Position 59 is an N6-succinyllysine (K59). The heme b site is built by H63 and H92. R104 is subject to Asymmetric dimethylarginine. At T123 the chain carries Phosphothreonine.

Belongs to the globin family. Heterotetramer of two alpha chains and two beta chains. As to expression, red blood cells.

Its function is as follows. Involved in oxygen transport from the lung to the various peripheral tissues. The chain is Hemoglobin subunit beta-2 (HBB2) from Tapirus terrestris (Lowland tapir).